The sequence spans 356 residues: Alpha-N-acetylneuraminide alpha-2,8-sialyltransferase (356 aa).

Residues 1 to 29 (MSPCGRARRQTSRGAMAVLAWKFPRTRLP) are Cytoplasmic-facing. A helical; Signal-anchor for type II membrane protein membrane pass occupies residues 30–48 (MGASALCVVVLCWLYIFPV). Residues 49–356 (YRLPNEKEIV…CEDTSLQPTS (308 aa)) lie on the Lumenal side of the membrane. N-linked (GlcNAc...) asparagine glycosylation is found at N71 and N119. Disulfide bonds link C138–C287 and C152–C347. Positions 143 and 166 each coordinate CMP-N-acetyl-beta-neuraminate. N-linked (GlcNAc...) asparagine glycosylation is found at N214 and N245. Residues S274, T275, G276, W296, and H310 each contribute to the CMP-N-acetyl-beta-neuraminate site. Catalysis depends on H322, which acts as the Proton donor/acceptor.

This sequence belongs to the glycosyltransferase 29 family.

It localises to the golgi apparatus membrane. It catalyses the reaction an N-acetyl-alpha-neuraminyl-(2-&gt;3)-beta-D-galactosyl derivative + CMP-N-acetyl-beta-neuraminate = an N-acetyl-alpha-neuraminyl-(2-&gt;8)-N-acetyl-alpha-neuraminyl-(2-&gt;3)-beta-D-galactosyl derivative + CMP + H(+). The catalysed reaction is a ganglioside GM3 (d18:1(4E)) + CMP-N-acetyl-beta-neuraminate = a ganglioside GD3 (d18:1(4E)) + CMP + H(+). The enzyme catalyses a ganglioside GD3 (d18:1(4E)) + CMP-N-acetyl-beta-neuraminate = a ganglioside GT3 (d18:1(4E)) + CMP + H(+). It carries out the reaction a ganglioside GD1a (d18:1(4E)) + CMP-N-acetyl-beta-neuraminate = a ganglioside GT1a (d18:1(4E)) + CMP + H(+). It catalyses the reaction a ganglioside GT1b (d18:1(4E)) + CMP-N-acetyl-beta-neuraminate = a ganglioside GQ1b (d18:1(4E)) + CMP + H(+). The catalysed reaction is a ganglioside GM1b (d18:1(4E)) + CMP-N-acetyl-beta-neuraminate = a ganglioside GD1c (d18:1(4E)) + CMP + H(+). The enzyme catalyses a ganglioside GD3 + CMP-N-acetyl-beta-neuraminate = a ganglioside GT3 + CMP + H(+). It carries out the reaction [alpha-N-acetylneuraminyl-(2-&gt;8)](n)-alpha-N-acetylneuraminyl-(2-&gt;8)-alpha-N-acetylneuraminyl-(2-&gt;3)-beta-D-galactosyl-(1-&gt;4)-beta-D-glucosyl-(1&lt;-&gt;1)-ceramide + CMP-N-acetyl-beta-neuraminate = [alpha-N-acetylneuraminyl-(2-&gt;8)](n+1)-alpha-N-acetylneuraminyl-(2-&gt;8)-alpha-N-acetylneuraminyl-(2-&gt;3)-beta-D-galactosyl-(1-&gt;4)-beta-D-glucosyl-(1&lt;-&gt;1)-ceramide + CMP + H(+). It participates in protein modification; protein glycosylation. It functions in the pathway lipid metabolism; sphingolipid metabolism. Catalyzes the addition of sialic acid in alpha 2,8-linkage to the sialic acid moiety of the ganglioside GM3 to form ganglioside GD3; gangliosides are a subfamily of complex glycosphingolipds that contain one or more residues of sialic acid. Can catalyze the addition of a second alpha-2,8- sialic acid to GD3 to form GT3. Can use GM1b, GD1a and GT1b as acceptor substrates to synthesize GD1c, GT1a and GQ1b respectively. This is Alpha-N-acetylneuraminide alpha-2,8-sialyltransferase from Pan troglodytes (Chimpanzee).